A 453-amino-acid chain; its full sequence is Homogentisate 1,2-dioxygenase (453 aa).

His-306 functions as the Proton acceptor in the catalytic mechanism. His-349 and Glu-355 together coordinate Fe cation. Residues Tyr-364 and His-385 each coordinate homogentisate. His-385 contributes to the Fe cation binding site.

It belongs to the homogentisate dioxygenase family. In terms of assembly, hexamer; dimer of trimers. Requires Fe cation as cofactor.

It catalyses the reaction homogentisate + O2 = 4-maleylacetoacetate + H(+). It functions in the pathway amino-acid degradation; L-phenylalanine degradation; acetoacetate and fumarate from L-phenylalanine: step 4/6. Its function is as follows. Involved in the catabolism of homogentisate (2,5-dihydroxyphenylacetate or 2,5-OH-PhAc), a central intermediate in the degradation of phenylalanine and tyrosine. Catalyzes the oxidative ring cleavage of the aromatic ring of homogentisate to yield maleylacetoacetate. This chain is Homogentisate 1,2-dioxygenase, found in Rhizobium leguminosarum bv. trifolii (strain WSM2304).